The chain runs to 347 residues: Quinolinate synthase (347 aa).

Histidine 47 and serine 68 together coordinate iminosuccinate. Cysteine 113 serves as a coordination point for [4Fe-4S] cluster. Iminosuccinate is bound by residues 139 to 141 (YAN) and serine 156. Cysteine 200 contributes to the [4Fe-4S] cluster binding site. Iminosuccinate contacts are provided by residues 226–228 (HPE) and threonine 243. Cysteine 297 contacts [4Fe-4S] cluster.

Belongs to the quinolinate synthase family. Type 1 subfamily. Requires [4Fe-4S] cluster as cofactor.

The protein resides in the cytoplasm. The enzyme catalyses iminosuccinate + dihydroxyacetone phosphate = quinolinate + phosphate + 2 H2O + H(+). The protein operates within cofactor biosynthesis; NAD(+) biosynthesis; quinolinate from iminoaspartate: step 1/1. Functionally, catalyzes the condensation of iminoaspartate with dihydroxyacetone phosphate to form quinolinate. The sequence is that of Quinolinate synthase from Escherichia coli O127:H6 (strain E2348/69 / EPEC).